A 217-amino-acid chain; its full sequence is Ribulose-phosphate 3-epimerase (217 aa).

A substrate-binding site is contributed by S7. Residues H32, D34, and H65 each coordinate a divalent metal cation. The active-site Proton acceptor is D34. Residues H65, G141 to G144, D175 to G177, and G197 to S198 each bind substrate. D175 provides a ligand contact to a divalent metal cation. D175 functions as the Proton donor in the catalytic mechanism.

It belongs to the ribulose-phosphate 3-epimerase family. A divalent metal cation serves as cofactor.

The enzyme catalyses D-ribulose 5-phosphate = D-xylulose 5-phosphate. It participates in carbohydrate degradation. Catalyzes the reversible epimerization of D-ribulose 5-phosphate to D-xylulose 5-phosphate. The protein is Ribulose-phosphate 3-epimerase of Bacillus subtilis (strain 168).